We begin with the raw amino-acid sequence, 363 residues long: Translocating chain-associated membrane protein 1-like 1 (363 aa).

Topologically, residues 1–29 are cytoplasmic; the sequence is MGLRKKNARNPPVLSHEFMVQNHADMVSC. The chain crosses the membrane as a helical span at residues 30–50; that stretch reads VGMFFVLGLMFEGTSEMSIAF. At 51–80 the chain is on the lumenal side; the sequence is LTLQHGVVVPAEGLPSGSRTLYHYGVKDLA. The chain crosses the membrane as a helical span at residues 81–101; the sequence is TVFFYMLVAIIIHATIQEYVL. At 102-120 the chain is on the cytoplasmic side; the sequence is DKLSRRLQLTKGKQNKLNE. The TLC domain maps to 116–324; the sequence is NKLNEAGQLS…TVWLQRWLED (209 aa). The helical transmembrane segment at 121-141 threads the bilayer; it reads AGQLSVFYIVSGIWGMIILAS. Residues 142–159 lie on the Lumenal side of the membrane; sequence ENCLSDPTLLWKSQPHNM. The helical transmembrane segment at 160–179 threads the bilayer; sequence MTFQMKFFYISQLAYWFHSF. Residues 180 to 191 lie on the Cytoplasmic side of the membrane; the sequence is PELYFQKVRKQD. The helical transmembrane segment at 192 to 214 threads the bilayer; the sequence is IPGQLIYIGLHLFHIGGAYLLYL. Topologically, residues 215 to 218 are lumenal; that stretch reads NHLG. The chain crosses the membrane as a helical span at residues 219–241; that stretch reads LLLLMLHYAVELLSSVCSLLYFG. Residues 242–250 lie on the Cytoplasmic side of the membrane; that stretch reads DERYQKGLS. Residues 251–271 traverse the membrane as a helical segment; that stretch reads LWPIVFISGRLVTLIVSVVTV. Over 272–295 the chain is Lumenal; sequence GLHLAGTNRNGNALSGNVNVLAAK. Residues 296–316 traverse the membrane as a helical segment; that stretch reads IAVLSSSCSIQVYITWTLTTV. At 317-363 the chain is on the cytoplasmic side; sequence WLQRWLEDANLHVCGRKRRSRARKGTENGVENPNRIDSPPKKKEKAP. The segment at 338 to 363 is disordered; sequence ARKGTENGVENPNRIDSPPKKKEKAP. Residues 354–363 show a composition bias toward basic and acidic residues; the sequence is SPPKKKEKAP.

This sequence belongs to the TRAM family.

It localises to the endoplasmic reticulum membrane. In terms of biological role, stimulatory or required for the translocation of secretory proteins across the ER membrane. The protein is Translocating chain-associated membrane protein 1-like 1 (Tram1l1) of Mus musculus (Mouse).